The following is a 101-amino-acid chain: Urease subunit beta (101 aa).

This sequence belongs to the urease beta subunit family. In terms of assembly, heterotrimer of UreA (gamma), UreB (beta) and UreC (alpha) subunits. Three heterotrimers associate to form the active enzyme.

The protein localises to the cytoplasm. It carries out the reaction urea + 2 H2O + H(+) = hydrogencarbonate + 2 NH4(+). The protein operates within nitrogen metabolism; urea degradation; CO(2) and NH(3) from urea (urease route): step 1/1. The protein is Urease subunit beta of Albidiferax ferrireducens (strain ATCC BAA-621 / DSM 15236 / T118) (Rhodoferax ferrireducens).